Here is a 72-residue protein sequence, read N- to C-terminus: uncharacterized protein (72 aa).

It belongs to the asfivirus I73R family.

It localises to the virion. This is an uncharacterized protein from Ornithodoros (relapsing fever ticks).